The chain runs to 698 residues: eEF1A lysine and N-terminal methyltransferase (698 aa).

Methionine 1 carries the post-translational modification N-acetylmethionine. Residue serine 267 is modified to Phosphoserine. Residues 431–461 are disordered; that stretch reads KDTSHRAQKKRKKDRKKQRPADTSEDFPPAP. Positions 436-448 are enriched in basic residues; that stretch reads RAQKKRKKDRKKQ.

The protein belongs to the methyltransferase superfamily. As to quaternary structure, forms a tripartite complex containing GAB1, METTL13 and SPRY2. Within the complex interacts with GAB1 and SPRY2. In terms of tissue distribution, expressed in the inner ear (at protein level). Expression is detected in the cochlear duct, spiral limbus region, efferent and afferent nerves, and in spiral ganglion neurons (at protein level).

The protein localises to the cytoplasm. It localises to the nucleus. It is found in the mitochondrion. It catalyses the reaction L-lysyl-[protein] + S-adenosyl-L-methionine = N(6)-methyl-L-lysyl-[protein] + S-adenosyl-L-homocysteine + H(+). The catalysed reaction is N(6)-methyl-L-lysyl-[protein] + S-adenosyl-L-methionine = N(6),N(6)-dimethyl-L-lysyl-[protein] + S-adenosyl-L-homocysteine + H(+). It carries out the reaction N-terminal glycyl-L-lysyl-L-glutamyl-[protein] + 3 S-adenosyl-L-methionine = N-terminal N,N,N-trimethyl-glycyl-L-lysyl-L-glutamyl-[protein] + 3 S-adenosyl-L-homocysteine + 3 H(+). Functionally, dual methyltransferase that catalyzes methylation of elongation factor 1-alpha (EEF1A1 and EEF1A2) at two different positions, and is therefore involved in the regulation of mRNA translation. Via its C-terminus, methylates EEF1A1 and EEF1A2 at the N-terminal residue 'Gly-2'. Via its N-terminus dimethylates EEF1A1 and EEF1A2 at residue 'Lys-55'. Has no activity towards core histones H2A, H2B, H3 and H4. This is eEF1A lysine and N-terminal methyltransferase from Mus musculus (Mouse).